The sequence spans 322 residues: Ribosomal RNA small subunit methyltransferase H (322 aa).

Residues 43–45, aspartate 60, phenylalanine 86, aspartate 104, and glutamine 111 contribute to the S-adenosyl-L-methionine site; that span reads GGY.

It belongs to the methyltransferase superfamily. RsmH family.

The protein resides in the cytoplasm. It catalyses the reaction cytidine(1402) in 16S rRNA + S-adenosyl-L-methionine = N(4)-methylcytidine(1402) in 16S rRNA + S-adenosyl-L-homocysteine + H(+). Functionally, specifically methylates the N4 position of cytidine in position 1402 (C1402) of 16S rRNA. In Caulobacter sp. (strain K31), this protein is Ribosomal RNA small subunit methyltransferase H.